The sequence spans 594 residues: DELLA protein 1 (594 aa).

The tract at residues 1–36 (MKREHQESFGGGVISNNNKTNTNHLNSSKNINFGEC) is disordered. Over residues 15–30 (SNNNKTNTNHLNSSKN) the composition is skewed to low complexity. A DELLA motif motif is present at residues 61 to 65 (DELLA). One can recognise a GRAS domain in the interval 207–587 (VDTQETGVRL…RSLIATSAWK (381 aa)). The interval 214–268 (VRLVHTLMACAEAIQQKNLKLAEALVKHISLLASLQTGAMRKVASYFAQALARRI) is leucine repeat I (LRI). The tract at residues 216–253 (LVHTLMACAEAIQQKNLKLAEALVKHISLLASLQTGAM) is required for possible homodimerization. A LxCxE motif; degenerate motif is present at residues 221 to 225 (MACAE). The VHIID stretch occupies residues 285 to 350 (HMHFYESSPY…GGPPTFRLTG (66 aa)). Residues 316–320 (VHVID) carry the VHIID motif. Residues 364–396 (QVGWKLAQLAQTIGVQFEFRGFVCNSIADLDPN) form a leucine repeat II (LRII) region. Residues 406–508 (VAVNSVFELH…EIYLGKQICN (103 aa)) form a PFYRE region. Residues 414–418 (LHTML) carry the LXXLL motif; degenerate motif. The SAW stretch occupies residues 511 to 587 (AYEGVDRVER…RSLIATSAWK (77 aa)).

The protein belongs to the GRAS family. DELLA subfamily. May be a homodimer. Ubiquitinated. Upon GA application it is ubiquitinated, leading to its subsequent degradation. In terms of tissue distribution, strongly expressed in the vascular tissue and endodermis but barely in the inner cortical cells where arbuscule are formed during arbuscular mycorrhizal (AM) symbiosis.

It is found in the nucleus. In terms of biological role, probable transcriptional regulator that acts as a repressor of the gibberellin (GA) signaling pathway. Probably acts by participating in large multiprotein complexes that repress transcription of GA-inducible genes. Upon GA application, it is degraded by the proteasome, allowing the GA signaling pathway. Together with DELLA2, required to enable arbuscule development during arbuscular mycorrhizal (AM) symbiosis with AM fungi (e.g. Glomus versiforme) via the regulation of RAM1 which, in turn, regulates various AM genes (e.g. NSP1, NSP2, PT4, LEC5, RAM2, EXO70I, STR and RAD1). The chain is DELLA protein 1 from Medicago truncatula (Barrel medic).